We begin with the raw amino-acid sequence, 359 residues long: tRNA-specific 2-thiouridylase MnmA (359 aa).

ATP contacts are provided by residues 10–17 and L36; that span reads GISGGVDS. Residue C101 is the Nucleophile of the active site. The cysteines at positions 101 and 197 are disulfide-linked. G125 contributes to the ATP binding site. Positions 147–149 are interaction with tRNA; it reads KDQ. C197 serves as the catalytic Cysteine persulfide intermediate. The interval 306–307 is interaction with tRNA; sequence RY.

The protein belongs to the MnmA/TRMU family.

It localises to the cytoplasm. The enzyme catalyses S-sulfanyl-L-cysteinyl-[protein] + uridine(34) in tRNA + AH2 + ATP = 2-thiouridine(34) in tRNA + L-cysteinyl-[protein] + A + AMP + diphosphate + H(+). Catalyzes the 2-thiolation of uridine at the wobble position (U34) of tRNA, leading to the formation of s(2)U34. This is tRNA-specific 2-thiouridylase MnmA from Chlorobium chlorochromatii (strain CaD3).